The following is a 75-amino-acid chain: Kappa-thalatoxin-Tas2a (75 aa).

The signal sequence occupies residues 1 to 22; sequence MKFQMIAAVLLIAFCLSVVVTA. Positions 23–40 are excised as a propeptide; the sequence is RMELQDDEEMKNGSFQKR. The region spanning 43 to 75 is the ShKT domain; it reads CIDTIPKSRCTAFQCKHSMKYRLSFCRKTCGTC. Intrachain disulfides connect cysteine 43–cysteine 75, cysteine 52–cysteine 68, and cysteine 57–cysteine 72.

The protein belongs to the sea anemone type 1 potassium channel toxin family. Type 1a subfamily.

The protein localises to the secreted. It localises to the nematocyst. Functionally, inhibits voltage-gated potassium channels (Kv) with higher potency for Kv1.1/KCNA1 and Kv1.3/KCNA3 (IC(50)=3.4 nM). The sequence is that of Kappa-thalatoxin-Tas2a from Thalassianthus aster (Fuzzy-tipped anemone).